Here is a 328-residue protein sequence, read N- to C-terminus: ATP synthase mitochondrial F1 complex assembly factor 1 (328 aa).

The N-terminal 57 residues, 1–57 (MAAVVVAAAGGAGPAVLQVAGLYRGLCAVRSRALGLGLVSPAQLRVFPVRPGSGRPE), are a transit peptide targeting the mitochondrion.

This sequence belongs to the ATP11 family. As to quaternary structure, interacts with ATP5F1B; involved in the assembly of the F1 component of the mitochondrial ATP synthase (ATPase). Weakly expressed in muscle.

The protein resides in the mitochondrion inner membrane. Functionally, has a complex stabilizing activity in the assembly of the mitochondrial F1-F0 complex. The polypeptide is ATP synthase mitochondrial F1 complex assembly factor 1 (Homo sapiens (Human)).